The following is a 7214-amino-acid chain: Nonribosomal peptide synthetase atnA (7214 aa).

Residues 257-651 are adenylation 1; that stretch reads ERKALEQPHA…VGRKDTQVKI (395 aa). The Carrier 1 domain maps to 786-862; sequence EPVTETEKAV…AMSQIAVELS (77 aa). Ser823 carries the O-(pantetheine 4'-phosphoryl)serine modification. The tract at residues 899-1318 is condensation 1; the sequence is EDAYPATALQ…LVSQKDYTQI (420 aa). Positions 1340 to 1735 are adenylation 2; that stretch reads QVLATPDAPA…ARKDTQAKVR (396 aa). Positions 1877–1953 constitute a Carrier 2 domain; that stretch reads QPTSDIEKKV…ALAGRAQYIE (77 aa). Position 1914 is an O-(pantetheine 4'-phosphoryl)serine (Ser1914). The tract at residues 1962–2384 is epimerization; the sequence is PEAEVIDEWF…RQVLETGIDE (423 aa). Positions 2431–2845 are condensation 2; the sequence is SPCSPMQLGL…MLSPLDRASL (415 aa). The tract at residues 2866–3262 is adenylation 3; the sequence is QNARKRPHAL…VGRKDTQVKV (397 aa). The Carrier 3 domain occupies 3398–3472; that stretch reads ALETPMEETI…DMARIVVAAY (75 aa). Ser3433 bears the O-(pantetheine 4'-phosphoryl)serine mark. The tract at residues 3510-3904 is condensation 3; that stretch reads VEDVYPSTSL…QLCENEDGRL (395 aa). The interval 3943 to 4339 is adenylation 4; the sequence is ERARLHPDLL…VGRKDSQVKL (397 aa). Residues 4476–4552 form the Carrier 4 domain; sequence VPGSEAEKVI…ELAGRVTSIS (77 aa). Ser4513 carries the O-(pantetheine 4'-phosphoryl)serine modification. The segment at 4601–5033 is condensation 4; the sequence is VEDVYPCSPL…TSAAMRAQLL (433 aa). Residues 5051 to 5446 form an adenylation 5 region; sequence FHRTALRYPE…VGRKDTQIKF (396 aa). The segment at 5489 to 5515 is disordered; that stretch reads FITTEGGSGHENKGSPSLKGSSGDPVS. The Carrier 5 domain occupies 5591–5667; that stretch reads APRTAMEKRL…QMANIVARNA (77 aa). Ser5628 carries the O-(pantetheine 4'-phosphoryl)serine modification. Residues 5707 to 6123 are condensation 5; the sequence is QDVYPCTPLQ…HLLGDNEIKM (417 aa). The segment at 6145 to 6543 is adenylation 6; sequence ERAVLQPEAI…GRKDTQIKLR (399 aa). The 84-residue stretch at 6683-6766 folds into the Carrier 6 domain; the sequence is DPADKLALAL…DVARMIEHGN (84 aa). O-(pantetheine 4'-phosphoryl)serine is present on Ser6725. A thioesterase (TE) domain region spans residues 6814–7194; the sequence is ILLTGATGFL…KSISYMRQIG (381 aa). A disordered region spans residues 6895–6915; sequence STVEGRDHPGSESGSTAGPAE.

It belongs to the NRP synthetase family.

It functions in the pathway secondary metabolite biosynthesis. In terms of biological role, nonribosomal peptide synthetase; part of the gene cluster that mediates the biosynthesis of aspercryptins, linear lipopeptides built from six amino acids including 2 highly unusual and nonproteogenic amino acids, 2-amino-octanoic acid (2aoa) and 2-amino-dodecanol (2adol). The core structure of aspercryptins is as follows: Ser/Ala-Thr-Ile/Val-2aoa-Asn-2adol. The first step of aspercryptin biosynthesis is the generation of the fatty acid precursors, octanoic and dodecanoic acids, by the FAS subunits atnF and atnM. The fatty acid precursors are likely transformed into the corresponding alpha-amino fatty acids in three steps. First, they are hydroxylated by the cytochrome P450 monooxygenase atnE, then oxidized to the corresponding alpha-keto acids by the NAD(P)-dependent oxidoreductase atnD, and finally converted to the alpha-amino fatty acids by the PLP-dependent aminotransferases atnH or atnJ. the alpha-amino fatty acids, 2-amino-octanoic and 2-amino-dodecanoic acids, are recognized, activated, and covalently tethered to the NRPS atnA by its fourth and sixth adenylation domains. The second module of atnA is the Thr module and contains an epimerase (E) domain responsible for the epimerization of Thr to D-allo-Thr. Additionally, despite atnA having only one epimerase domain, the first amino acid of aspercryptin A1 is D-Ser, suggesting that serine is either loaded directly as D-Ser on the first module or that the epimerase domain in the threonine module epimerizes both L-Ser and L-Thr. After condensation of the hexapeptide of aspercryptin, the C-terminal reductase (TE) domain might be involved in the reductive release and production of the aldehyde hexapeptide. Further reduction would generate aspercryptins. The variety of aspercryptins produced reflects the flexibility of the atnA NRPS, allowing incorporation of alanine instead of serine, valine for isoleucine, and a C10 fatty amino alcohol instead of the C12 version. AtnB seems to be involved in the selectivity for Ile versus Val by the third module. Moreover, type B, C and D aspercryptins have an additional N-terminal cichorine, acetyl and propionyl group respectively. This chain is Nonribosomal peptide synthetase atnA, found in Emericella nidulans (strain FGSC A4 / ATCC 38163 / CBS 112.46 / NRRL 194 / M139) (Aspergillus nidulans).